The chain runs to 300 residues: ATP-dependent (S)-NAD(P)H-hydrate dehydratase (300 aa).

In terms of domain architecture, YjeF C-terminal spans 6-297 (YAGKIKEFIP…GCIHQSFTSL (292 aa)). Residues Gly106 and 158–164 (NEVEFKR) each bind (6S)-NADPHX. ATP-binding positions include 188 to 192 (KGSTD) and 218 to 227 (GSNRRCGGQG). Asp228 lines the (6S)-NADPHX pocket.

Belongs to the NnrD/CARKD family. Mg(2+) serves as cofactor.

It carries out the reaction (6S)-NADHX + ATP = ADP + phosphate + NADH + H(+). The enzyme catalyses (6S)-NADPHX + ATP = ADP + phosphate + NADPH + H(+). Catalyzes the dehydration of the S-form of NAD(P)HX at the expense of ATP, which is converted to ADP. Together with NAD(P)HX epimerase, which catalyzes the epimerization of the S- and R-forms, the enzyme allows the repair of both epimers of NAD(P)HX, a damaged form of NAD(P)H that is a result of enzymatic or heat-dependent hydration. The polypeptide is ATP-dependent (S)-NAD(P)H-hydrate dehydratase (Pediculus humanus subsp. corporis (Body louse)).